The following is a 469-amino-acid chain: GTPase Der (469 aa).

EngA-type G domains lie at 3–167 and 176–349; these read PTLV…PEEE and PKIA…AAAF. GTP contacts are provided by residues 9–16, 56–60, 119–122, 182–189, 229–233, and 294–297; these read GRPNVGKS, DTGGL, NKAE, DTAGV, and NKWD. Residues 350 to 436 enclose the KH-like domain; it reads IKLSTPKLTR…RIQIKEDEGK (87 aa). Basic and acidic residues predominate over residues 432-443; that stretch reads EDEGKNPFEGKK. The interval 432–469 is disordered; sequence EDEGKNPFEGKKRAPLSESEATRMRRKKRVRRKVYGAD. Over residues 455-469 the composition is skewed to basic residues; sequence MRRKKRVRRKVYGAD.

Belongs to the TRAFAC class TrmE-Era-EngA-EngB-Septin-like GTPase superfamily. EngA (Der) GTPase family. As to quaternary structure, associates with the 50S ribosomal subunit.

In terms of biological role, GTPase that plays an essential role in the late steps of ribosome biogenesis. In Thiobacillus denitrificans (strain ATCC 25259 / T1), this protein is GTPase Der.